Here is a 431-residue protein sequence, read N- to C-terminus: Glutamate-1-semialdehyde 2,1-aminomutase (431 aa).

The residue at position 265 (Lys265) is an N6-(pyridoxal phosphate)lysine.

It belongs to the class-III pyridoxal-phosphate-dependent aminotransferase family. HemL subfamily. As to quaternary structure, homodimer. The cofactor is pyridoxal 5'-phosphate.

It is found in the cytoplasm. The enzyme catalyses (S)-4-amino-5-oxopentanoate = 5-aminolevulinate. It participates in porphyrin-containing compound metabolism; protoporphyrin-IX biosynthesis; 5-aminolevulinate from L-glutamyl-tRNA(Glu): step 2/2. The polypeptide is Glutamate-1-semialdehyde 2,1-aminomutase (Vibrio parahaemolyticus serotype O3:K6 (strain RIMD 2210633)).